The chain runs to 135 residues: MAKSSDARSPAPHAAAPERVAAFRTGISAEARAAAYLIAKGYRIVARRFRTPYGEIDLVARRRNLLAFVEVKARAKLDDAAYAVTPRQQQRIIDAAQAWLMAHPEHADFELRFDAVLIAPKSLPRHLPAAFDASP.

Belongs to the UPF0102 family.

This chain is UPF0102 protein RPC_0320, found in Rhodopseudomonas palustris (strain BisB18).